A 243-amino-acid chain; its full sequence is Zinc import ATP-binding protein ZnuC (243 aa).

In terms of domain architecture, ABC transporter spans L8–H225. An ATP-binding site is contributed by G40 to S47.

The protein belongs to the ABC transporter superfamily. Zinc importer (TC 3.A.1.15.5) family. In terms of assembly, the complex is composed of two ATP-binding proteins (ZnuC), two transmembrane proteins (ZnuB) and a solute-binding protein (ZnuA).

It is found in the cell inner membrane. The catalysed reaction is Zn(2+)(out) + ATP(in) + H2O(in) = Zn(2+)(in) + ADP(in) + phosphate(in) + H(+)(in). Part of the ABC transporter complex ZnuABC involved in zinc import. Responsible for energy coupling to the transport system. This chain is Zinc import ATP-binding protein ZnuC, found in Psychrobacter arcticus (strain DSM 17307 / VKM B-2377 / 273-4).